The sequence spans 91 residues: Small ribosomal subunit protein bS20 (91 aa).

The span at 1 to 18 shows a compositional bias: basic and acidic residues; the sequence is MPLHKSAEKRLRQSDRKN. Residues 1 to 25 are disordered; the sequence is MPLHKSAEKRLRQSDRKNARNRARK.

Belongs to the bacterial ribosomal protein bS20 family.

Its function is as follows. Binds directly to 16S ribosomal RNA. The polypeptide is Small ribosomal subunit protein bS20 (Chlorobium phaeovibrioides (strain DSM 265 / 1930) (Prosthecochloris vibrioformis (strain DSM 265))).